We begin with the raw amino-acid sequence, 274 residues long: Putative outer membrane protein CPn_1073/CP_0776/CPj1073/CpB1118 (274 aa).

The first 21 residues, 1–21, serve as a signal peptide directing secretion; it reads MRRYLFMVLALCLYRAAPLEA.

Its subcellular location is the cell outer membrane. This chain is Putative outer membrane protein CPn_1073/CP_0776/CPj1073/CpB1118, found in Chlamydia pneumoniae (Chlamydophila pneumoniae).